Here is a 65-residue protein sequence, read N- to C-terminus: Photosystem II reaction center protein H (65 aa).

Residues 27–47 form a helical membrane-spanning segment; sequence GAVPVMAFIGVLLLVFLVIML.

This sequence belongs to the PsbH family. PSII is composed of 1 copy each of membrane proteins PsbA, PsbB, PsbC, PsbD, PsbE, PsbF, PsbH, PsbI, PsbJ, PsbK, PsbL, PsbM, PsbT, PsbX, PsbY, Psb30/Ycf12, peripheral proteins PsbO, CyanoQ (PsbQ), PsbU, PsbV and a large number of cofactors. It forms dimeric complexes.

It localises to the cellular thylakoid membrane. One of the components of the core complex of photosystem II (PSII), required for its stability and/or assembly. PSII is a light-driven water:plastoquinone oxidoreductase that uses light energy to abstract electrons from H(2)O, generating O(2) and a proton gradient subsequently used for ATP formation. It consists of a core antenna complex that captures photons, and an electron transfer chain that converts photonic excitation into a charge separation. This is Photosystem II reaction center protein H from Prochlorococcus marinus (strain NATL1A).